Here is a 203-residue protein sequence, read N- to C-terminus: Glycerol-3-phosphate acyltransferase (203 aa).

The next 5 helical transmembrane spans lie at 10–30, 59–79, 87–107, 116–136, and 168–188; these read LLAL…GLLI, PAAA…VILA, AAQI…YLKF, FFGT…AIWL, and LVVL…ENII.

This sequence belongs to the PlsY family. In terms of assembly, probably interacts with PlsX.

It is found in the cell inner membrane. The catalysed reaction is an acyl phosphate + sn-glycerol 3-phosphate = a 1-acyl-sn-glycero-3-phosphate + phosphate. It participates in lipid metabolism; phospholipid metabolism. Catalyzes the transfer of an acyl group from acyl-phosphate (acyl-PO(4)) to glycerol-3-phosphate (G3P) to form lysophosphatidic acid (LPA). This enzyme utilizes acyl-phosphate as fatty acyl donor, but not acyl-CoA or acyl-ACP. This Dinoroseobacter shibae (strain DSM 16493 / NCIMB 14021 / DFL 12) protein is Glycerol-3-phosphate acyltransferase.